The following is a 244-amino-acid chain: Orotidine 5'-phosphate decarboxylase (244 aa).

Residues Asp-20, Lys-42, 70–79 (DLKFFDIPAT), Thr-125, Arg-186, Gln-195, Gly-215, and Arg-216 contribute to the substrate site. Lys-72 (proton donor) is an active-site residue.

The protein belongs to the OMP decarboxylase family. Type 1 subfamily. Homodimer.

The enzyme catalyses orotidine 5'-phosphate + H(+) = UMP + CO2. It participates in pyrimidine metabolism; UMP biosynthesis via de novo pathway; UMP from orotate: step 2/2. Its function is as follows. Catalyzes the decarboxylation of orotidine 5'-monophosphate (OMP) to uridine 5'-monophosphate (UMP). The chain is Orotidine 5'-phosphate decarboxylase from Xylella fastidiosa (strain M23).